We begin with the raw amino-acid sequence, 472 residues long: Tubulin gamma chain (472 aa).

142–148 (AGGTGSG) provides a ligand contact to GTP.

It belongs to the tubulin family.

The protein localises to the cytoplasm. It is found in the cytoskeleton. The protein resides in the microtubule organizing center. Functionally, tubulin is the major constituent of microtubules. The gamma chain is found at microtubule organizing centers (MTOC) such as the spindle poles, suggesting that it is involved in the minus-end nucleation of microtubule assembly. This Anemia phyllitidis (Fern) protein is Tubulin gamma chain (TUBG).